Consider the following 415-residue polypeptide: Phosphoglycerate transport system transcriptional regulatory protein PgtA (415 aa).

The region spanning 7–121 is the Response regulatory domain; that stretch reads SILLIDDDVD…KLLILIEDAL (115 aa). Aspartate 56 carries the post-translational modification 4-aspartylphosphate. In terms of domain architecture, Sigma-54 factor interaction spans 142-341; that stretch reads LIGRSEWMNQ…LANAAELFAV (200 aa). 170 to 177 provides a ligand contact to ATP; that stretch reads GEHGTGRM. The segment at residues 385 to 404 is a DNA-binding region (H-T-H motif); it reads INEVAEYLQIPRKKLYLRMK.

Post-translationally, phosphorylated by PgtB.

The protein resides in the cytoplasm. Functionally, member of the two-component regulatory system PgtB/PgtA that regulates the inducible phosphoglycerate transport system. When activated by PgtB it acts in conjunction with sigma-54 as a transcriptional activator. This chain is Phosphoglycerate transport system transcriptional regulatory protein PgtA (pgtA), found in Salmonella typhimurium (strain LT2 / SGSC1412 / ATCC 700720).